A 325-amino-acid chain; its full sequence is ATP phosphoribosyltransferase (325 aa).

The protein belongs to the ATP phosphoribosyltransferase family. Long subfamily. Mg(2+) serves as cofactor.

It localises to the cytoplasm. It catalyses the reaction 1-(5-phospho-beta-D-ribosyl)-ATP + diphosphate = 5-phospho-alpha-D-ribose 1-diphosphate + ATP. It functions in the pathway amino-acid biosynthesis; L-histidine biosynthesis; L-histidine from 5-phospho-alpha-D-ribose 1-diphosphate: step 1/9. Its activity is regulated as follows. Feedback inhibited by histidine. Its function is as follows. Catalyzes the condensation of ATP and 5-phosphoribose 1-diphosphate to form N'-(5'-phosphoribosyl)-ATP (PR-ATP). Has a crucial role in the pathway because the rate of histidine biosynthesis seems to be controlled primarily by regulation of HisG enzymatic activity. In Rhodopseudomonas palustris (strain HaA2), this protein is ATP phosphoribosyltransferase.